The sequence spans 412 residues: Glutamate dehydrogenase (412 aa).

Lys102 is a catalytic residue.

This sequence belongs to the Glu/Leu/Phe/Val dehydrogenases family. In roots, stems, leaves and flowers but not in fruits.

It localises to the mitochondrion matrix. The enzyme catalyses L-glutamate + NAD(+) + H2O = 2-oxoglutarate + NH4(+) + NADH + H(+). It carries out the reaction L-glutamate + NADP(+) + H2O = 2-oxoglutarate + NH4(+) + NADPH + H(+). This chain is Glutamate dehydrogenase (GDH1), found in Solanum lycopersicum (Tomato).